Here is an 874-residue protein sequence, read N- to C-terminus: MSTPVFTVADIRKTFLDFFAAKGHTVVPSSSLVPGNDPTLMFTNSGMVQFKDVFLGVDKRPYVRATSVQACLRAGGKHNDLENVGYTARHHTFFEMLGNWSFGDYFKRESLKWAWELLTEVYKLPAERLLATVYEEDDEAYDIWTKEIGLPPERVIRIGDNKGGRYKSDNFWMMADTGPCGPCSEIFYDHGDHIPGGPPGSPDEDGDRFIEIWNNVFMQFNMAEDGSVTPLPAPCVDTGMGLERLAAILQHVHSNYEIDIFDALIKAASRETGEADLGHKSLRVIADHIRATAFLVSDGVNPSNEGRGYVQRRIIRRAIRHGYLLGKKTPFFHKLVADLAGLMGDAYPRLAADAQRITEVLKAEEERFFETLETGMQILDAALADGVKVLPGEVAFKLHDTYGFPLDLSADVCRERGLSVDEAGFTVAMNQQKAQARAAGKFKMDRALDYSGTGNVFTGYEHLEETSKIIAIYADGVSAAALKAGQNGVIVLDTTPFYAESGGQAGDEGELISGSARFAVSDTLKIKADVYGHHGTLAEGTLNVGDHVSARVNKEVRAATVRNHSATHLMHKALREVLGAHVQQKGSLVNAERTRFDFAHNAPMTDAQIREVEARVNAEILANSATDASEMDMEAAQKTGAMMLFGEKYGDSVRVLSIGSSKELCGGTHVGRTGDIGLFKIVAESGVASGVRRVEAVTGQNALAYLQSLESTVQSAAGTLKASPSELQNRIGQVLDQVKALEKEVAALKGKLASSQGDELMLQAVDVKGLKVLAARLEGADAKTLRETMDKLKDKLKTAVIVLAAVDGSKVQIAAGVTSDSTGKVKAGELVNFVAGQVGGKGGGKADMAMAGGTDASNLNAALDSVLGWVSAKL.

4 residues coordinate Zn(2+): His564, His568, Cys665, and His669.

The protein belongs to the class-II aminoacyl-tRNA synthetase family. Zn(2+) serves as cofactor.

It is found in the cytoplasm. It carries out the reaction tRNA(Ala) + L-alanine + ATP = L-alanyl-tRNA(Ala) + AMP + diphosphate. Functionally, catalyzes the attachment of alanine to tRNA(Ala) in a two-step reaction: alanine is first activated by ATP to form Ala-AMP and then transferred to the acceptor end of tRNA(Ala). Also edits incorrectly charged Ser-tRNA(Ala) and Gly-tRNA(Ala) via its editing domain. The sequence is that of Alanine--tRNA ligase from Polaromonas naphthalenivorans (strain CJ2).